A 128-amino-acid chain; its full sequence is Aspartate 1-decarboxylase (128 aa).

The Schiff-base intermediate with substrate; via pyruvic acid role is filled by Ser25. Ser25 is modified (pyruvic acid (Ser)). Residue Thr57 coordinates substrate. The active-site Proton donor is the Tyr58. 73 to 75 contributes to the substrate binding site; it reads GAA.

Belongs to the PanD family. Heterooctamer of four alpha and four beta subunits. The cofactor is pyruvate. Is synthesized initially as an inactive proenzyme, which is activated by self-cleavage at a specific serine bond to produce a beta-subunit with a hydroxyl group at its C-terminus and an alpha-subunit with a pyruvoyl group at its N-terminus.

The protein localises to the cytoplasm. The catalysed reaction is L-aspartate + H(+) = beta-alanine + CO2. Its pathway is cofactor biosynthesis; (R)-pantothenate biosynthesis; beta-alanine from L-aspartate: step 1/1. Its function is as follows. Catalyzes the pyruvoyl-dependent decarboxylation of aspartate to produce beta-alanine. This is Aspartate 1-decarboxylase from Ruminiclostridium cellulolyticum (strain ATCC 35319 / DSM 5812 / JCM 6584 / H10) (Clostridium cellulolyticum).